The following is a 286-amino-acid chain: UDP-3-O-acyl-N-acetylglucosamine deacetylase (286 aa).

Residues H79, H237, and D241 each coordinate Zn(2+). H264 (proton donor) is an active-site residue.

The protein belongs to the LpxC family. The cofactor is Zn(2+).

It carries out the reaction a UDP-3-O-[(3R)-3-hydroxyacyl]-N-acetyl-alpha-D-glucosamine + H2O = a UDP-3-O-[(3R)-3-hydroxyacyl]-alpha-D-glucosamine + acetate. It participates in glycolipid biosynthesis; lipid IV(A) biosynthesis; lipid IV(A) from (3R)-3-hydroxytetradecanoyl-[acyl-carrier-protein] and UDP-N-acetyl-alpha-D-glucosamine: step 2/6. In terms of biological role, catalyzes the hydrolysis of UDP-3-O-myristoyl-N-acetylglucosamine to form UDP-3-O-myristoylglucosamine and acetate, the committed step in lipid A biosynthesis. This Brucella abortus (strain 2308) protein is UDP-3-O-acyl-N-acetylglucosamine deacetylase.